The following is a 161-amino-acid chain: ATP synthase subunit b 1 (161 aa).

Residues 5–25 (AETWVAVAFVLMVALFIYFGA) form a helical membrane-spanning segment.

This sequence belongs to the ATPase B chain family. As to quaternary structure, F-type ATPases have 2 components, F(1) - the catalytic core - and F(0) - the membrane proton channel. F(1) has five subunits: alpha(3), beta(3), gamma(1), delta(1), epsilon(1). F(0) has three main subunits: a(1), b(2) and c(10-14). The alpha and beta chains form an alternating ring which encloses part of the gamma chain. F(1) is attached to F(0) by a central stalk formed by the gamma and epsilon chains, while a peripheral stalk is formed by the delta and b chains.

The protein localises to the cell inner membrane. Functionally, f(1)F(0) ATP synthase produces ATP from ADP in the presence of a proton or sodium gradient. F-type ATPases consist of two structural domains, F(1) containing the extramembraneous catalytic core and F(0) containing the membrane proton channel, linked together by a central stalk and a peripheral stalk. During catalysis, ATP synthesis in the catalytic domain of F(1) is coupled via a rotary mechanism of the central stalk subunits to proton translocation. Its function is as follows. Component of the F(0) channel, it forms part of the peripheral stalk, linking F(1) to F(0). In Afipia carboxidovorans (strain ATCC 49405 / DSM 1227 / KCTC 32145 / OM5) (Oligotropha carboxidovorans), this protein is ATP synthase subunit b 1.